The following is a 426-amino-acid chain: Trophoblast glycoprotein (426 aa).

A signal peptide spans 1 to 31 (MPGAGSRGPSAGDGRLRLARLALVLLGWVSA). The Extracellular segment spans residues 32-361 (SAPSSSLPSS…ATLPQSLQTS (330 aa)). The span at 34–51 (PSSSLPSSSTSPAAFLAS) shows a compositional bias: low complexity. Residues 34–54 (PSSSLPSSSTSPAAFLASGSA) are disordered. The LRRNT domain occupies 53–91 (SAQPPPAERCPAACECSEAARTVKCVNRNLLEVPADLPP). 2 disulfides stabilise this stretch: C62–C68 and C66–C77. LRR repeat units lie at residues 92–113 (YVRN…AFAR), 116–139 (PLAD…GAFE), and 141–163 (LPGL…FTFA). Residue N124 is glycosylated (N-linked (GlcNAc...) asparagine). N166 carries N-linked (GlcNAc...) asparagine glycosylation. LRR repeat units lie at residues 172 to 210 (PSPL…AALR), 215 to 238 (LRGL…LLDQ), 239 to 261 (LPSL…ASFR), and 262 to 281 (NLTH…VLHN). N281 carries N-linked (GlcNAc...) asparagine glycosylation. The LRRCT domain occupies 289-352 (GLAHVRVFLD…LTSSDLDCDA (64 aa)). Intrachain disulfides connect C304/C329 and C306/C350. The helical transmembrane segment at 362-382 (YVFLGIVLALIGAIFLLVLYL) threads the bilayer. The Cytoplasmic portion of the chain corresponds to 383–426 (NRKGIKKWMHNIRDACRDHMEGYHYRYEINADPRLTNLSSNSDV). Phosphoserine is present on S424.

Highly glycosylated.

It is found in the cell membrane. Its function is as follows. May function as an inhibitor of Wnt/beta-catenin signaling by indirectly interacting with LRP6 and blocking Wnt3a-dependent LRP6 internalization. This chain is Trophoblast glycoprotein (Tpbg), found in Rattus norvegicus (Rat).